We begin with the raw amino-acid sequence, 89 residues long: Large ribosomal subunit protein uL29 (89 aa).

It belongs to the universal ribosomal protein uL29 family.

The polypeptide is Large ribosomal subunit protein uL29 (Frankia alni (strain DSM 45986 / CECT 9034 / ACN14a)).